The following is a 2549-amino-acid chain: Serine/threonine-protein kinase mTOR (2549 aa).

M1 carries the post-translational modification N-acetylmethionine. The interaction with NBN stretch occupies residues 1–651; that stretch reads MLGTGPAVAT…HVVSQTAVQV (651 aa). 32 HEAT repeats span residues 16–53, 55–99, 100–137, 138–179, 180–220, 222–276, 277–313, 314–364, 365–409, 410–445, 446–494, 495–529, 530–563, 564–596, 597–636, 637–683, 686–724, 727–766, 769–811, 814–853, 857–893, 894–942, 943–988, 989–1027, 1029–1068, 1069–1105, 1106–1144, 1145–1188, 1189–1225, 1226–1273, 1274–1311, and 1312–1345; these read SSNV…MELR, MSQE…VEGG, NSTR…AMAG, DTFT…AISV, PTFF…LILT, QREP…RISS, MEGE…PRHI, TPFT…CCRD, LMEE…AFTD, TQYL…VAVR, SEFK…RAMG, PGIQ…RQIP, QLKK…GLAH, QLAS…EFEG, HSLT…SIHL, ISGH…DERF, HLAQ…MNPA, MPFL…NAPR, RPYM…VSGL, RKWV…STGY, PYRK…LLGA, LDPY…GNLP, LDEF…KCVQ, FLPQ…KSHI, PYMD…GEFK, LYLP…LFGA, NLDD…RLTE, SLDF…GKKY, QIFI…LADE, EEDP…GAAR, RVSK…QAYN, and PMAR…ELAL. Position 567 is a phosphoserine (S567). Residue T1162 is modified to Phosphothreonine. K1218 bears the N6-acetyllysine mark. S1261 carries the phosphoserine modification. 16 TPR repeats span residues 1346-1382, 1383-1408, 1409-1442, 1443-1473, 1474-1507, 1508-1541, 1542-1574, 1575-1614, 1615-1649, 1650-1693, 1694-1731, 1732-1786, 1787-1846, 1898-1930, 1931-1970, and 1971-2005; these read TSQD…GIVL, LGER…QKGP, TPAI…HFGE, LEIQ…NKED, PELM…VNDE, TQAK…RDTH, DGAF…LDAE, LTAM…RREI, IRQI…PHED, MRTW…PTAH, PQVT…AQHA, IATE…DRSW, YKAW…STEG, NNLQ…VKAI, QIDT…YHPQ, and ALIY…SNTL. One can recognise an FAT domain in the interval 1382–1982; sequence LLGERAAKCR…IYPLTVASKS (601 aa). Residues K1662, K1702, and R1749 each coordinate 1D-myo-inositol hexakisphosphate. Residues 1825–1860 show a composition bias toward low complexity; it reads ITNATTAATTAASAAAATSTEGSNSESEAESNENSP. Residues 1825 to 1867 are disordered; it reads ITNATTAATTAASAAAATSTEGSNSESEAESNENSPTPSPLQK. The interval 2012–2144 is sufficient for interaction with the FKBP1A/rapamycin complex; the sequence is VSEELIRVAI…DLELAVPGTY (133 aa). A Glycyl lysine isopeptide (Lys-Gly) (interchain with G-Cter in ubiquitin) cross-link involves residue K2066. In terms of domain architecture, PI3K/PI4K catalytic spans 2156–2469; that stretch reads IAPSLQVITS…GVELGEPAHK (314 aa). The residue at position 2159 (S2159) is a Phosphoserine; by TBK1. Positions 2162–2168 are G-loop; it reads VITSKQR. T2164 bears the Phosphothreonine mark. 2 residues coordinate ATP: S2165 and Q2167. T2173 is subject to Phosphothreonine; by PKB/AKT1. ATP is bound by residues L2185, K2187, E2190, Y2225, G2238, W2239, V2240, and T2245. Positions 2258–2296 are interaction with MLST8; sequence KILLNIEHRIMLRMAPDYDHLTLMQKVEVFEHAVNNTAG. Residues 2335–2343 form a catalytic loop region; the sequence is GLGDRHPSN. Mg(2+) is bound at residue N2343. M2345 and I2356 together coordinate ATP. Residues 2355–2380 are activation loop; sequence HIDFGDCFEVAMTREKFPEKIPFRLT. Mg(2+) is bound at residue D2357. At T2446 the chain carries Phosphothreonine; by RPS6KB1. Residue S2448 is modified to Phosphoserine; by RPS6KB1. A phosphoserine mark is found at S2478 and S2481. An FATC domain is found at 2517 to 2549; it reads DTLDVPTQVELLIKQATSHENLCQCYIGWCPFW.

Belongs to the PI3/PI4-kinase family. As to quaternary structure, part of the mechanistic target of rapamycin complex 1 (mTORC1) which contains MTOR, MLST8 and RPTOR. The mTORC1 complex is a 1 Md obligate dimer of two stoichiometric heterotetramers with overall dimensions of 290 A x 210 A x 135 A. It has a rhomboid shape and a central cavity, the dimeric interfaces are formed by interlocking interactions between the two MTOR and the two RPTOR subunits. The MLST8 subunit forms distal foot-like protuberances, and contacts only one MTOR within the complex, while the small AKT1S1/PRAS40 localizes to the midsection of the central core, in close proximity to RPTOR. mTORC1 associates with AKT1S1/PRAS40, which inhibits its activity by blocking MTOR substrate-recruitment site. Component of the mechanistic target of rapamycin complex 2 (mTORC2), consisting in two heterotretramers composed of MTOR, MLST8, RICTOR and MAPKAP1/SIN1. Interacts with PLPP7 and PML. Interacts with PRR5 and RICTOR; the interaction is direct within the mTORC2 complex and interaction with RICTOR is enhanced by deubiquitination of RICTOR by USP9X. mTORC1 and mTORC2 associate with DEPTOR, which regulates their activity. Interacts with WAC; WAC positively regulates MTOR activity by promoting the assembly of the TTT complex composed of TELO2, TTI1 and TTI2 and the RUVBL complex composed of RUVBL1 and RUVBL2 into the TTT-RUVBL complex which leads to the dimerization of the mTORC1 complex and its subsequent activation. Interacts with UBQLN1. Interacts with TTI1 and TELO2. Interacts with CLIP1; phosphorylates and regulates CLIP1. Interacts with NBN. Interacts with HTR6. Interacts with BRAT1. Interacts with MEAK7 (via C-terminal domain); the interaction increases upon nutrient stimulation. Interacts with TM4SF5; the interaction is positively regulated by arginine and is negatively regulated by leucine. Interacts with GPR137B. Interacts with NCKAP1L. Interacts with TPCN1 and TPCN2; the interaction is required for TPCN1 and TPCN2 sensitivity to ATP. Interacts with ATP6V1A and with CRYAB, forming a ternary complex. Interacts with SLC38A7; this interaction mediates the recruitment of mTORC1 to the lysosome and its subsequent activation. Interacts with TSPAN8. Post-translationally, autophosphorylates when part of mTORC1 or mTORC2. Phosphorylation at Ser-1261, Ser-2159 and Thr-2164 promotes autophosphorylation. Phosphorylated at Ser-2448 by RPS6KB1. Phosphorylation in the kinase domain modulates the interactions of MTOR with RPTOR and AKT1S1/PRAS40 and leads to increased intrinsic mTORC1 kinase activity. Phosphorylation at Ser-2159 by TBK1 in response to growth factors and pathogen recognition receptors promotes mTORC1 activity. Phosphorylation at Ser-2159 by TBK1 in response to EGF growth factor promotes mTORC2 activity, leading to AKT1 phosphorylation and activation. Phosphorylation at Thr-2173 in the ATP-binding region by AKT1 strongly reduces kinase activity. In terms of processing, ubiquitinated at Lys-2066 by the SCF(FBXO22) complex via 'Lys-27'-linked ubiquitination prevents mTORC1 substrate recruitment.

Its subcellular location is the lysosome membrane. The protein localises to the endoplasmic reticulum membrane. It localises to the golgi apparatus membrane. The protein resides in the cell membrane. It is found in the mitochondrion outer membrane. Its subcellular location is the cytoplasm. The protein localises to the nucleus. It localises to the PML body. The protein resides in the microsome membrane. It is found in the cytoplasmic vesicle. Its subcellular location is the phagosome. The enzyme catalyses L-seryl-[protein] + ATP = O-phospho-L-seryl-[protein] + ADP + H(+). It carries out the reaction L-threonyl-[protein] + ATP = O-phospho-L-threonyl-[protein] + ADP + H(+). It catalyses the reaction L-tyrosyl-[protein] + ATP = O-phospho-L-tyrosyl-[protein] + ADP + H(+). Its activity is regulated as follows. The mTORC1 complex is activated in response to nutrients, growth factors or amino acids: activation requires relocalization of the mTORC1 complex to lysosomes that is mediated by the Ragulator complex, SLC38A9, and the Rag GTPases RagA/RRAGA, RagB/RRAGB, RagC/RRAGC and RagD/RRAGD. Activation of mTORC1 by growth factors such as insulin involves AKT1-mediated phosphorylation of TSC1-TSC2, which leads to the activation of the RHEB GTPase a potent activator of the protein kinase activity of mTORC1. Insulin-stimulated and amino acid-dependent phosphorylation at Ser-1261 promotes autophosphorylation and the activation of mTORC1. On the other hand, low cellular energy levels can inhibit mTORC1 through activation of PRKAA1 while hypoxia inhibits mTORC1 through a REDD1-dependent mechanism which may also require PRKAA1. The kinase activity of MTOR within the mTORC1 complex is positively regulated by MLST8. The kinase activity of MTOR is inhibited by DEPTOR and AKT1S1. The non-canonical mTORC1 complex is independent of the RHEB GTPase and specifically mediates phosphorylation of MiT/TFE factors TFEB and TFE3 but not other mTORC1 substrates: it is activated by FLCN, which activates Rag GTPases RagC/RRAGC and RagD/RRAGD. MTOR is the target of the immunosuppressive and anti-cancer drug rapamycin which acts in complex with FKBP1A/FKBP12, and specifically inhibits its kinase activity. mTORC2 is also activated by growth factors, but seems to be nutrient-insensitive. mTORC2 associates and is directly activated by ribosomes. mTORC2 may also be regulated by RHEB but in an indirect manner through the PI3K signaling pathway. Serine/threonine protein kinase which is a central regulator of cellular metabolism, growth and survival in response to hormones, growth factors, nutrients, energy and stress signals. MTOR directly or indirectly regulates the phosphorylation of at least 800 proteins. Functions as part of 2 structurally and functionally distinct signaling complexes mTORC1 and mTORC2 (mTOR complex 1 and 2). In response to nutrients, growth factors or amino acids, mTORC1 is recruited to the lysosome membrane and promotes protein, lipid and nucleotide synthesis by phosphorylating key regulators of mRNA translation and ribosome synthesis. This includes phosphorylation of EIF4EBP1 and release of its inhibition toward the elongation initiation factor 4E (eiF4E). Moreover, phosphorylates and activates RPS6KB1 and RPS6KB2 that promote protein synthesis by modulating the activity of their downstream targets including ribosomal protein S6, eukaryotic translation initiation factor EIF4B, and the inhibitor of translation initiation PDCD4. Stimulates the pyrimidine biosynthesis pathway, both by acute regulation through RPS6KB1-mediated phosphorylation of the biosynthetic enzyme CAD, and delayed regulation, through transcriptional enhancement of the pentose phosphate pathway which produces 5-phosphoribosyl-1-pyrophosphate (PRPP), an allosteric activator of CAD at a later step in synthesis, this function is dependent on the mTORC1 complex. Regulates ribosome synthesis by activating RNA polymerase III-dependent transcription through phosphorylation and inhibition of MAF1 an RNA polymerase III-repressor. Activates dormant ribosomes by mediating phosphorylation of SERBP1, leading to SERBP1 inactivation and reactivation of translation. In parallel to protein synthesis, also regulates lipid synthesis through SREBF1/SREBP1 and LPIN1. To maintain energy homeostasis mTORC1 may also regulate mitochondrial biogenesis through regulation of PPARGC1A. In the same time, mTORC1 inhibits catabolic pathways: negatively regulates autophagy through phosphorylation of ULK1. Under nutrient sufficiency, phosphorylates ULK1 at 'Ser-758', disrupting the interaction with AMPK and preventing activation of ULK1. Also prevents autophagy through phosphorylation of the autophagy inhibitor DAP. Also prevents autophagy by phosphorylating RUBCNL/Pacer under nutrient-rich conditions. Prevents autophagy by mediating phosphorylation of AMBRA1, thereby inhibiting AMBRA1 ability to mediate ubiquitination of ULK1 and interaction between AMBRA1 and PPP2CA. mTORC1 exerts a feedback control on upstream growth factor signaling that includes phosphorylation and activation of GRB10 a INSR-dependent signaling suppressor. Among other potential targets mTORC1 may phosphorylate CLIP1 and regulate microtubules. The mTORC1 complex is inhibited in response to starvation and amino acid depletion. The non-canonical mTORC1 complex, which acts independently of RHEB, specifically mediates phosphorylation of MiT/TFE factors TFEB and TFE3 in the presence of nutrients, promoting their cytosolic retention and inactivation. Upon starvation or lysosomal stress, inhibition of mTORC1 induces dephosphorylation and nuclear translocation of TFEB and TFE3, promoting their transcription factor activity. The mTORC1 complex regulates pyroptosis in macrophages by promoting GSDMD oligomerization. MTOR phosphorylates RPTOR which in turn inhibits mTORC1. As part of the mTORC2 complex, MTOR transduces signals from growth factors to pathways involved in proliferation, cytoskeletal organization, lipogenesis and anabolic output. In response to growth factors, mTORC2 phosphorylates and activates AGC protein kinase family members, including AKT (AKT1, AKT2 and AKT3), PKC (PRKCA, PRKCB and PRKCE) and SGK1. In contrast to mTORC1, mTORC2 is nutrient-insensitive. mTORC2 plays a critical role in AKT1 activation by mediating phosphorylation of different sites depending on the context, such as 'Thr-450', 'Ser-473', 'Ser-477' or 'Thr-479', facilitating the phosphorylation of the activation loop of AKT1 on 'Thr-308' by PDPK1/PDK1 which is a prerequisite for full activation. mTORC2 also regulates the phosphorylation of SGK1 at 'Ser-422'. mTORC2 may regulate the actin cytoskeleton, through phosphorylation of PRKCA, PXN and activation of the Rho-type guanine nucleotide exchange factors RHOA and RAC1A or RAC1B. The mTORC2 complex also phosphorylates various proteins involved in insulin signaling, such as FBXW8 and IGF2BP1. May also regulate insulin signaling by acting as a tyrosine protein kinase that catalyzes phosphorylation of IGF1R and INSR. Regulates osteoclastogenesis by adjusting the expression of CEBPB isoforms. Plays an important regulatory role in the circadian clock function; regulates period length and rhythm amplitude of the suprachiasmatic nucleus (SCN) and liver clocks. The sequence is that of Serine/threonine-protein kinase mTOR from Mus musculus (Mouse).